Here is a 146-residue protein sequence, read N- to C-terminus: Large ribosomal subunit protein uL24 (146 aa).

Positions 1–33 are disordered; the sequence is MKYNPRVTSSRRRNRKPHFTASSSERRVXMSSP. Residues 9-18 show a composition bias toward basic residues; it reads SSRRRNRKPH.

The protein belongs to the universal ribosomal protein uL24 family.

The chain is Large ribosomal subunit protein uL24 (RPL26) from Brassica campestris (Field mustard).